Consider the following 215-residue polypeptide: uncharacterized protein (215 aa).

This is an uncharacterized protein from Saccharomyces cerevisiae (strain ATCC 204508 / S288c) (Baker's yeast).